The following is a 360-amino-acid chain: UPF0283 membrane protein Oant_2119 (360 aa).

Residues 1–30 (MTEKTPRKPASFTVSQASNRPEAADEAPRR) form a disordered region. A run of 2 helical transmembrane segments spans residues 77–97 (ILFG…TEDL) and 108–128 (LGWT…AIVV).

This sequence belongs to the UPF0283 family.

Its subcellular location is the cell inner membrane. This Brucella anthropi (strain ATCC 49188 / DSM 6882 / CCUG 24695 / JCM 21032 / LMG 3331 / NBRC 15819 / NCTC 12168 / Alc 37) (Ochrobactrum anthropi) protein is UPF0283 membrane protein Oant_2119.